The primary structure comprises 1218 residues: Probable RNA-dependent RNA polymerase SHL2 (1218 aa).

It belongs to the RdRP family.

The catalysed reaction is RNA(n) + a ribonucleoside 5'-triphosphate = RNA(n+1) + diphosphate. In terms of biological role, involved in the RNA silencing pathway. Probably required for the generation of small interfering RNAs (siRNAs). Regulates shoot apical meristem (SAM) initiation and maintenance and leaf polarization through the trans-acting siRNAS (ta-siRNAs) pathway which probably modulates the expression of the ARF2, ARF3, ARF4, ARF14 and ARF15 genes. This chain is Probable RNA-dependent RNA polymerase SHL2 (SHL2), found in Oryza sativa subsp. japonica (Rice).